A 105-amino-acid chain; its full sequence is Heat shock protein HspQ (105 aa).

This sequence belongs to the HspQ family.

Its subcellular location is the cytoplasm. Involved in the degradation of certain denaturated proteins, including DnaA, during heat shock stress. In Sodalis glossinidius (strain morsitans), this protein is Heat shock protein HspQ.